A 151-amino-acid chain; its full sequence is MTNLKAQKRLAASIAGVGINRIKVVEDYIEDVQSSLTRDEIRNLIKDGKIIVLKKVGISGGRLKERRKKRSLKSEGKKSGSRKGKKGARANSKQMWVKRVRKIRAYLKWLRDHKVIDRHTYRELYLKTKGGNYKGVSDVRNVLIQMGKIKG.

The tract at residues 62–93 is disordered; it reads RLKERRKKRSLKSEGKKSGSRKGKKGARANSK. Over residues 79-88 the composition is skewed to basic residues; sequence SGSRKGKKGA.

The protein belongs to the eukaryotic ribosomal protein eL19 family. As to quaternary structure, part of the 50S ribosomal subunit.

Binds to the 23S rRNA. In Saccharolobus solfataricus (strain ATCC 35092 / DSM 1617 / JCM 11322 / P2) (Sulfolobus solfataricus), this protein is Large ribosomal subunit protein eL19.